A 328-amino-acid chain; its full sequence is Hydrogenase-2 operon protein HybA (328 aa).

A signal peptide spans 1-27; it reads MNRRNFIKAASCGALLTGALPSVSHAA. 4Fe-4S ferredoxin-type domains are found at residues 38 to 68, 103 to 134, and 136 to 165; these read LGML…RNPQ, NGYA…KDPK, and GIVH…YDYN. Residues Cys-47, Cys-50, Cys-53, Cys-57, Cys-112, Cys-115, Cys-120, Cys-124, Cys-145, Cys-148, Cys-151, Cys-155, Cys-174, Cys-177, Cys-193, and Cys-197 each contribute to the [4Fe-4S] cluster site.

It depends on [4Fe-4S] cluster as a cofactor.

It localises to the periplasm. Functionally, participates in the periplasmic electron-transferring activity of hydrogenase 2 during its catalytic turnover. The chain is Hydrogenase-2 operon protein HybA (hybA) from Escherichia coli O157:H7.